The chain runs to 109 residues: uncharacterized protein (109 aa).

Residues 1 to 25 form the signal peptide; the sequence is MKGIFLVVQLGFSIMVFLFLAAVNW. A helical membrane pass occupies residues 73–95; the sequence is YPVMSALMIISFLYVLAALFLLI.

The protein localises to the membrane. This is an uncharacterized protein from Bacillus subtilis (strain 168).